The sequence spans 509 residues: Cobyric acid synthase (509 aa).

The GATase cobBQ-type domain maps to 262–459 (EIKVGIIKLP…IHGIFENDNW (198 aa)). Cys343 (nucleophile) is an active-site residue. His451 is a catalytic residue.

Belongs to the CobB/CobQ family. CobQ subfamily.

It participates in cofactor biosynthesis; adenosylcobalamin biosynthesis. In terms of biological role, catalyzes amidations at positions B, D, E, and G on adenosylcobyrinic A,C-diamide. NH(2) groups are provided by glutamine, and one molecule of ATP is hydrogenolyzed for each amidation. The polypeptide is Cobyric acid synthase (Prochlorococcus marinus (strain AS9601)).